Reading from the N-terminus, the 243-residue chain is Variant surface antigen E (243 aa).

Positions 1-29 are cleaved as a signal peptide; that stretch reads MKKSIFSKKLLVSFGSLVTLAAIPLIAIS. The N-palmitoyl cysteine moiety is linked to residue cysteine 30. Cysteine 30 carries the S-diacylglycerol cysteine lipid modification. Residues 34–243 are disordered; the sequence is TDNLSQSQQP…TTSDGQNQNK (210 aa). The span at 52–92 shows a compositional bias: low complexity; sequence GTNTENGSNNGSGSGTTNSSGGTNQSGSASGNGSSNSSVST. Residues 93 to 243 show a composition bias toward polar residues; sequence PDGQHSNPSN…TTSDGQNQNK (151 aa). A run of 11 repeats spans residues 97-109, 110-122, 123-135, 136-148, 149-161, 162-174, 175-187, 188-200, 201-213, 214-226, and 227-239. The segment at 97–239 is 11 X 13 AA tandem repeats; that stretch reads HSNPSNPTTS…PSNPTTSDGQ (143 aa).

Its subcellular location is the cell membrane. Responsible for the antigenic diversity for host adaptation. Expression in E.coli of a construct containing vlpD, vlpE, and vlpF yields antigenically distinguishable products corresponding to each gene. The polypeptide is Variant surface antigen E (vlpE) (Mesomycoplasma hyorhinis (Mycoplasma hyorhinis)).